The sequence spans 506 residues: Bifunctional purine biosynthesis protein PurH (506 aa).

The MGS-like domain maps to 1 to 146 (MARLALLSVS…KNFAHLTVLC (146 aa)).

This sequence belongs to the PurH family.

It carries out the reaction (6R)-10-formyltetrahydrofolate + 5-amino-1-(5-phospho-beta-D-ribosyl)imidazole-4-carboxamide = 5-formamido-1-(5-phospho-D-ribosyl)imidazole-4-carboxamide + (6S)-5,6,7,8-tetrahydrofolate. The catalysed reaction is IMP + H2O = 5-formamido-1-(5-phospho-D-ribosyl)imidazole-4-carboxamide. It functions in the pathway purine metabolism; IMP biosynthesis via de novo pathway; 5-formamido-1-(5-phospho-D-ribosyl)imidazole-4-carboxamide from 5-amino-1-(5-phospho-D-ribosyl)imidazole-4-carboxamide (10-formyl THF route): step 1/1. It participates in purine metabolism; IMP biosynthesis via de novo pathway; IMP from 5-formamido-1-(5-phospho-D-ribosyl)imidazole-4-carboxamide: step 1/1. The sequence is that of Bifunctional purine biosynthesis protein PurH from Nostoc sp. (strain PCC 7120 / SAG 25.82 / UTEX 2576).